Here is a 916-residue protein sequence, read N- to C-terminus: Alanine--tRNA ligase (916 aa).

Zn(2+)-binding residues include His611, His615, Cys714, and His718.

Belongs to the class-II aminoacyl-tRNA synthetase family. Requires Zn(2+) as cofactor.

The protein resides in the cytoplasm. The enzyme catalyses tRNA(Ala) + L-alanine + ATP = L-alanyl-tRNA(Ala) + AMP + diphosphate. Its function is as follows. Catalyzes the attachment of alanine to tRNA(Ala) in a two-step reaction: alanine is first activated by ATP to form Ala-AMP and then transferred to the acceptor end of tRNA(Ala). Also edits incorrectly charged Ser-tRNA(Ala) and Gly-tRNA(Ala) via its editing domain. This Methanospirillum hungatei JF-1 (strain ATCC 27890 / DSM 864 / NBRC 100397 / JF-1) protein is Alanine--tRNA ligase.